Reading from the N-terminus, the 396-residue chain is Dimethyladenosine transferase 2, mitochondrial (396 aa).

Residues 1–43 (MRGPAMRLPPRIALSALARGPSCILGSGAATRKDWQTRNRRGF) constitute a mitochondrion transit peptide. The tract at residues 43–71 (FSDFNIEPLPDSDLEESSPWTSRNRSEPT) is disordered. The S-adenosyl-L-methionine site is built by Ile-74, Glu-123, and Asp-149. The tract at residues 328–329 (KR) is DNA-binding.

This sequence belongs to the class I-like SAM-binding methyltransferase superfamily. rRNA adenine N(6)-methyltransferase family. KsgA subfamily. In terms of assembly, homodimer. Component of the mitochondrial transcription initiation complex, composed at least of TFB2M, TFAM and POLRMT. In this complex TFAM recruits POLRMT to the promoter whereas TFB2M induces structural changes in POLRMT to enable promoter opening and trapping of the DNA non-template strand. Interacts with mitochondrial RNA polymerase POLRMT. Interacts with TFAM. Ubiquitously expressed.

The protein localises to the mitochondrion. It catalyses the reaction adenosine in rRNA + S-adenosyl-L-methionine = N(6)-methyladenosine in rRNA + S-adenosyl-L-homocysteine + H(+). In terms of biological role, S-adenosyl-L-methionine-dependent rRNA methyltransferase which may methylate two specific adjacent adenosines in the loop of a conserved hairpin near the 3'-end of 12S mitochondrial rRNA. Component of the mitochondrial transcription initiation complex, composed at least of TFB2M, TFAM and POLRMT that is required for basal transcription of mitochondrial DNA. In this complex, TFAM recruits POLRMT to a specific promoter whereas TFB2M induces structural changes in POLRMT to enable promoter opening and trapping of the DNA non-template strand. Stimulates transcription independently of the methyltransferase activity. The sequence is that of Dimethyladenosine transferase 2, mitochondrial from Mus musculus (Mouse).